The sequence spans 291 residues: ATP synthase gamma chain (291 aa).

The protein belongs to the ATPase gamma chain family. In terms of assembly, F-type ATPases have 2 components, CF(1) - the catalytic core - and CF(0) - the membrane proton channel. CF(1) has five subunits: alpha(3), beta(3), gamma(1), delta(1), epsilon(1). CF(0) has three main subunits: a, b and c.

The protein resides in the cell inner membrane. Produces ATP from ADP in the presence of a proton gradient across the membrane. The gamma chain is believed to be important in regulating ATPase activity and the flow of protons through the CF(0) complex. The chain is ATP synthase gamma chain from Xanthobacter autotrophicus (strain ATCC BAA-1158 / Py2).